Reading from the N-terminus, the 147-residue chain is Hemoglobin subunit beta (147 aa).

Valine 2 bears the N-acetylvaline mark. Residues histidine 3 to histidine 147 form the Globin domain. Threonine 13 bears the Phosphothreonine mark. Serine 45 is subject to Phosphoserine. N6-acetyllysine is present on lysine 60. Residue histidine 64 coordinates heme b. Position 83 is an N6-acetyllysine (lysine 83). Histidine 93 serves as a coordination point for heme b. Cysteine 94 is modified (S-nitrosocysteine). At lysine 145 the chain carries N6-acetyllysine.

It belongs to the globin family. Heterotetramer of two alpha chains and two beta chains. As to expression, red blood cells.

Involved in oxygen transport from the lung to the various peripheral tissues. This is Hemoglobin subunit beta (HBB) from Carlito syrichta (Philippine tarsier).